The sequence spans 186 residues: ATP synthase subunit delta (186 aa).

This sequence belongs to the ATPase delta chain family. In terms of assembly, F-type ATPases have 2 components, F(1) - the catalytic core - and F(0) - the membrane proton channel. F(1) has five subunits: alpha(3), beta(3), gamma(1), delta(1), epsilon(1). CF(0) has four main subunits: a(1), b(1), b'(1) and c(10-14). The alpha and beta chains form an alternating ring which encloses part of the gamma chain. F(1) is attached to F(0) by a central stalk formed by the gamma and epsilon chains, while a peripheral stalk is formed by the delta, b and b' chains.

It is found in the cell inner membrane. In terms of biological role, f(1)F(0) ATP synthase produces ATP from ADP in the presence of a proton or sodium gradient. F-type ATPases consist of two structural domains, F(1) containing the extramembraneous catalytic core and F(0) containing the membrane proton channel, linked together by a central stalk and a peripheral stalk. During catalysis, ATP synthesis in the catalytic domain of F(1) is coupled via a rotary mechanism of the central stalk subunits to proton translocation. Its function is as follows. This protein is part of the stalk that links CF(0) to CF(1). It either transmits conformational changes from CF(0) to CF(1) or is implicated in proton conduction. The sequence is that of ATP synthase subunit delta from Roseobacter denitrificans (strain ATCC 33942 / OCh 114) (Erythrobacter sp. (strain OCh 114)).